Consider the following 410-residue polypeptide: Arginine biosynthesis bifunctional protein ArgJ (410 aa).

Residues threonine 158, lysine 184, threonine 195, glutamate 282, asparagine 405, and threonine 410 each coordinate substrate. The active-site Nucleophile is the threonine 195.

It belongs to the ArgJ family. In terms of assembly, heterotetramer of two alpha and two beta chains.

The protein resides in the cytoplasm. The enzyme catalyses N(2)-acetyl-L-ornithine + L-glutamate = N-acetyl-L-glutamate + L-ornithine. It carries out the reaction L-glutamate + acetyl-CoA = N-acetyl-L-glutamate + CoA + H(+). It participates in amino-acid biosynthesis; L-arginine biosynthesis; L-ornithine and N-acetyl-L-glutamate from L-glutamate and N(2)-acetyl-L-ornithine (cyclic): step 1/1. It functions in the pathway amino-acid biosynthesis; L-arginine biosynthesis; N(2)-acetyl-L-ornithine from L-glutamate: step 1/4. Its function is as follows. Catalyzes two activities which are involved in the cyclic version of arginine biosynthesis: the synthesis of N-acetylglutamate from glutamate and acetyl-CoA as the acetyl donor, and of ornithine by transacetylation between N(2)-acetylornithine and glutamate. This is Arginine biosynthesis bifunctional protein ArgJ from Rhodopirellula baltica (strain DSM 10527 / NCIMB 13988 / SH1).